The sequence spans 391 residues: Mannose-6-phosphate isomerase (391 aa).

Gln-97, His-99, Glu-134, and His-255 together coordinate Zn(2+). The active site involves Arg-274. Position 280 is an N6-acetyllysine (Lys-280).

Belongs to the mannose-6-phosphate isomerase type 1 family. The cofactor is Zn(2+).

The protein localises to the cytoplasm. The enzyme catalyses D-mannose 6-phosphate = D-fructose 6-phosphate. Functionally, involved in the conversion of glucose to GDP-L-fucose, which can be converted to L-fucose, a capsular polysaccharide. The chain is Mannose-6-phosphate isomerase (manA) from Shigella flexneri.